The following is a 505-amino-acid chain: L-amino-acid oxidase (505 aa).

An N-terminal signal peptide occupies residues 1-18; that stretch reads MNVFLMFSLLFLAALGSC. A disulfide bridge connects residues Cys-28 and Cys-191. FAD contacts are provided by residues 61 to 62, 81 to 82, Arg-89, and 105 to 108; these read MS, EA, and GPMR. Arg-108 provides a ligand contact to substrate. Asn-190 carries N-linked (GlcNAc...) asparagine glycosylation. His-241 serves as a coordination point for substrate. Residue Val-279 participates in FAD binding. Cysteines 349 and 430 form a disulfide. A glycan (N-linked (GlcNAc...) asparagine) is linked at Asn-379. Tyr-390 provides a ligand contact to substrate. FAD contacts are provided by residues Glu-475 and 482–487; that span reads GWIDST. Residue 482 to 483 coordinates substrate; that stretch reads GW.

The protein belongs to the flavin monoamine oxidase family. FIG1 subfamily. In terms of assembly, monomer. This is in contrast with most of its orthologs, that are non-covalently linked homodimers. The cofactor is FAD. In terms of processing, N-glycosylated. Expressed by the venom gland.

It is found in the secreted. It carries out the reaction an L-alpha-amino acid + O2 + H2O = a 2-oxocarboxylate + H2O2 + NH4(+). The catalysed reaction is L-leucine + O2 + H2O = 4-methyl-2-oxopentanoate + H2O2 + NH4(+). In terms of biological role, catalyzes an oxidative deamination of predominantly hydrophobic and aromatic L-amino acids, thus producing hydrogen peroxide that may contribute to the diverse toxic effects of this enzyme. Shows activity on L-Leu. Exhibits diverse biological activities, such as hemorrhage, edema, antibacterial and antiparasitic activities, as well as regulation of platelet aggregation. Effects of snake L-amino oxidases on platelets are controversial, since they either induce aggregation or inhibit agonist-induced aggregation. These different effects are probably due to different experimental conditions. This protein has an ability to induce hemolysis and apoptosis. This is L-amino-acid oxidase from Protobothrops flavoviridis (Habu).